Consider the following 112-residue polypeptide: Cell cycle protein GpsB (112 aa).

Residues 38–72 are a coiled coil; sequence IKDYEAFHKEFEQLKQQNARLKRELEEQKLVATQV.

This sequence belongs to the GpsB family. In terms of assembly, forms polymers through the coiled coil domains. Interacts with PBP1, MreC and EzrA.

It localises to the cytoplasm. In terms of biological role, divisome component that associates with the complex late in its assembly, after the Z-ring is formed, and is dependent on DivIC and PBP2B for its recruitment to the divisome. Together with EzrA, is a key component of the system that regulates PBP1 localization during cell cycle progression. Its main role could be the removal of PBP1 from the cell pole after pole maturation is completed. Also contributes to the recruitment of PBP1 to the division complex. Not essential for septum formation. This Bacillus cereus (strain ZK / E33L) protein is Cell cycle protein GpsB.